The primary structure comprises 204 residues: N-(5'-phosphoribosyl)anthranilate isomerase (204 aa).

This sequence belongs to the TrpF family.

It carries out the reaction N-(5-phospho-beta-D-ribosyl)anthranilate = 1-(2-carboxyphenylamino)-1-deoxy-D-ribulose 5-phosphate. It functions in the pathway amino-acid biosynthesis; L-tryptophan biosynthesis; L-tryptophan from chorismate: step 3/5. In Bacillus mycoides (strain KBAB4) (Bacillus weihenstephanensis), this protein is N-(5'-phosphoribosyl)anthranilate isomerase.